The chain runs to 163 residues: Nucleotide-binding protein Ava_2001 (163 aa).

It belongs to the YajQ family.

Functionally, nucleotide-binding protein. The chain is Nucleotide-binding protein Ava_2001 from Trichormus variabilis (strain ATCC 29413 / PCC 7937) (Anabaena variabilis).